A 70-amino-acid polypeptide reads, in one-letter code: Probable rubredoxin HupI (70 aa).

The region spanning 15–66 is the Rubredoxin-like domain; it reads DDRMECGICWHVYDPAEGDPVWQIPPGTPFSNLTEDWRCPNCDALQSKFMRL. Fe cation is bound by residues C20, C23, C53, and C56.

It belongs to the rubredoxin family. Fe(3+) is required as a cofactor.

Could be an electron transport intermediate in hydrogen oxidation. The chain is Probable rubredoxin HupI (hupI) from Rhizobium leguminosarum bv. viciae.